The primary structure comprises 525 residues: D-arabinono-1,4-lactone oxidase (525 aa).

The FAD-binding PCMH-type domain maps to 23-197 (YSCRPQLYFQ…VKATIRVIPE (175 aa)). A Pros-8alpha-FAD histidine modification is found at histidine 60.

The protein belongs to the oxygen-dependent FAD-linked oxidoreductase family. The cofactor is FAD.

It localises to the mitochondrion membrane. The catalysed reaction is D-arabinono-1,4-lactone + O2 = dehydro-D-arabinono-1,4-lactone + H2O2 + H(+). It functions in the pathway cofactor biosynthesis; D-erythroascorbate biosynthesis; dehydro-D-arabinono-1,4-lactone from D-arabinose: step 2/2. This chain is D-arabinono-1,4-lactone oxidase (ALO1), found in Kluyveromyces lactis (strain ATCC 8585 / CBS 2359 / DSM 70799 / NBRC 1267 / NRRL Y-1140 / WM37) (Yeast).